We begin with the raw amino-acid sequence, 374 residues long: Secondary metabolism regulator laeA (374 aa).

A disordered region spans residues 1–75; the sequence is MFEMGPVGTR…NRNGSPSMSP (75 aa). The segment covering 23–40 has biased composition (polar residues); the sequence is SYHSPTSSDRGRSRQNSD. At Met207 the chain carries S-methylmethionine.

It belongs to the methyltransferase superfamily. LaeA methyltransferase family. As to quaternary structure, component of the heterotrimeric velvet complex composed of laeA, veA and velB; VeA acting as a bridging protein between laeA and velB. Post-translationally, self-methylates at Met-207.

It localises to the nucleus. It catalyses the reaction L-methionyl-[protein] + S-adenosyl-L-methionine = S-methyl-L-methionyl-[protein] + S-adenosyl-L-homocysteine. In terms of biological role, methyltransferase that performs automethylation at Met-207. No other methyl-accepting substrate has been identified yet. Component of the velvet transcription factor complex that acts as a global regulator for secondary metabolite gene expression. Controls the expression of the sterigmatocystin, penicillin, and lovastatin gene clusters. Controls light-dependent formation of the velB-vosA complex, veA protein modification, and is required for light-mediated inhibition of sexual development. Within the velvet complex, controls light-dependent secondary metabolism. Involved in the defense response against Drosophila melanogaster larval grazing. The protein is Secondary metabolism regulator laeA of Emericella nidulans (Aspergillus nidulans).